Here is a 155-residue protein sequence, read N- to C-terminus: Snaclec clone 2100755 (155 aa).

The signal sequence occupies residues 1–23 (MGRFIFVSFGLLVVFLSLSGTAA). 3 disulfide bridges follow: C25-C36, C53-C144, and C119-C136. Residues 32–145 (YDGHCYQVFS…CEKSVSFVCK (114 aa)) enclose the C-type lectin domain.

The protein belongs to the snaclec family. As to quaternary structure, heterodimer; disulfide-linked.

It localises to the secreted. In terms of biological role, interferes with one step of hemostasis (modulation of platelet aggregation, or coagulation cascade, for example). The protein is Snaclec clone 2100755 of Deinagkistrodon acutus (Hundred-pace snake).